We begin with the raw amino-acid sequence, 110 residues long: Protein YcgL (110 aa).

Positions 14–98 constitute a YcgL domain; sequence MFCVIYRSSK…PPEDLLKQHL (85 aa). Positions 88 to 110 are disordered; that stretch reads PPPEDLLKQHLSSVGQNTSPADR. A compositionally biased stretch (polar residues) spans 97–110; it reads HLSSVGQNTSPADR.

In Salmonella paratyphi A (strain ATCC 9150 / SARB42), this protein is Protein YcgL.